A 399-amino-acid chain; its full sequence is Elongation factor Tu (399 aa).

One can recognise a tr-type G domain in the interval 10–209 (KPHVNIGTIG…EVDAYIPTPE (200 aa)). Positions 19–26 (GHVDHGKT) are G1. 19–26 (GHVDHGKT) provides a ligand contact to GTP. Residue Thr-26 coordinates Mg(2+). The segment at 60–64 (GITIA) is G2. The G3 stretch occupies residues 81–84 (DCPG). GTP is bound by residues 81–85 (DCPGH) and 136–139 (NKQD). Positions 136–139 (NKQD) are G4. Residues 174–176 (SAL) form a G5 region.

Belongs to the TRAFAC class translation factor GTPase superfamily. Classic translation factor GTPase family. EF-Tu/EF-1A subfamily. Monomer.

It localises to the cytoplasm. The catalysed reaction is GTP + H2O = GDP + phosphate + H(+). Its function is as follows. GTP hydrolase that promotes the GTP-dependent binding of aminoacyl-tRNA to the A-site of ribosomes during protein biosynthesis. The sequence is that of Elongation factor Tu from Helicobacter pylori (strain Shi470).